The sequence spans 125 residues: Holo-[acyl-carrier-protein] synthase (125 aa).

2 residues coordinate Mg(2+): aspartate 8 and glutamate 57.

The protein belongs to the P-Pant transferase superfamily. AcpS family. It depends on Mg(2+) as a cofactor.

The protein localises to the cytoplasm. The catalysed reaction is apo-[ACP] + CoA = holo-[ACP] + adenosine 3',5'-bisphosphate + H(+). Its function is as follows. Transfers the 4'-phosphopantetheine moiety from coenzyme A to a Ser of acyl-carrier-protein. This chain is Holo-[acyl-carrier-protein] synthase, found in Blochmanniella floridana.